Reading from the N-terminus, the 162-residue chain is Allophycocyanin alpha-B chain (162 aa).

Asn71 carries the post-translational modification N4-methylasparagine. Cys81 contributes to the (2R,3E)-phycocyanobilin binding site.

Belongs to the phycobiliprotein family. Contains one covalently linked phycocyanobilin chromophore.

The protein localises to the plastid. It localises to the cyanelle thylakoid membrane. Its function is as follows. Allophycocyanin is a photosynthetic bile pigment-protein complex with maximum absorption at approximately 650 nanometers. The polypeptide is Allophycocyanin alpha-B chain (apcD) (Cyanophora paradoxa).